A 434-amino-acid chain; its full sequence is Adenylosuccinate synthetase (434 aa).

GTP contacts are provided by residues glycine 22–lysine 28 and glycine 50–threonine 52. Catalysis depends on aspartate 23, which acts as the Proton acceptor. Positions 23 and 50 each coordinate Mg(2+). Residues aspartate 23–lysine 26, asparagine 48–histidine 51, threonine 139, arginine 153, glutamine 234, threonine 249, and arginine 313 each bind IMP. Histidine 51 acts as the Proton donor in catalysis. Residue alanine 309–arginine 315 participates in substrate binding. Residues arginine 315, lysine 341–aspartate 343, and serine 423–glycine 425 contribute to the GTP site.

This sequence belongs to the adenylosuccinate synthetase family. In terms of assembly, homodimer. Requires Mg(2+) as cofactor.

It is found in the cytoplasm. It carries out the reaction IMP + L-aspartate + GTP = N(6)-(1,2-dicarboxyethyl)-AMP + GDP + phosphate + 2 H(+). Its pathway is purine metabolism; AMP biosynthesis via de novo pathway; AMP from IMP: step 1/2. Its function is as follows. Plays an important role in the de novo pathway of purine nucleotide biosynthesis. Catalyzes the first committed step in the biosynthesis of AMP from IMP. This is Adenylosuccinate synthetase from Pelodictyon phaeoclathratiforme (strain DSM 5477 / BU-1).